The primary structure comprises 387 residues: N6-succino-2-amino-2'-deoxyadenylate synthase (387 aa).

Residue Ser-14 is the Proton acceptor of the active site. ATP is bound by residues Ser-14, Thr-15, Gly-16, Lys-17, and Gly-18. Ser-14 contacts dGMP. Ser-14 serves as a coordination point for Mg(2+). Asn-40 serves as a coordination point for dGMP. Gly-42, His-43, and Thr-44 together coordinate ATP. Position 42 (Gly-42) interacts with Mg(2+). DGMP is bound by residues Ser-125, Thr-126, and Arg-140. Gln-207 provides a ligand contact to ATP. A dGMP-binding site is contributed by Thr-222. Position 293 (Thr-293) interacts with Mg(2+). Positions 293, 294, and 299 each coordinate L-aspartate. ATP is bound by residues Asn-324 and Asn-327.

The protein belongs to the Caudovirales PurZ family. It depends on Mg(2+) as a cofactor.

The catalysed reaction is dGMP + L-aspartate + ATP = (2S)-2-amino-2'-deoxyadenylo-succinate + ADP + phosphate + 2 H(+). The protein operates within purine metabolism. Involved in the synthesis of the atypical nucleotide dZTP (2-amino-2'-deoxyadenosine-5'-triphosphate). Catalyzes the condensation of aspartate with deoxyguanylate into dSMP (N6-succino-2-amino-2'-deoxyadenylate), which undergoes defumarylation and phosphorylation respectively by host PurB and guanylate/nucleoside diphosphate kinases to give dZTP. dZTP is integrated into the viral genome instead of adenine by the viral DNA polymerase. This Z-base probably completely replaces adenosine and forms a triple bond to the opposite T-base. The resulting non-standard viral DNA is called Z-genome. The chemically modified DNA is probably harder for the host bacteria to digest with nucleases or restriction enzymes. The sequence is that of N6-succino-2-amino-2'-deoxyadenylate synthase from Acinetobacter phage SH-Ab 15497.